The following is a 1077-amino-acid chain: MKGACILAWLFSSLGVWRLARPETQDPAKCQRAEHPVVSYKEIGPWLREFRAENAVDFSRLTFDPGQKELVVGARNYLFRLELEDLSLIQAVEWECDEATKKACYSKGKSKEECQNYIRVLLVGGDRLFTCGTNAFTPVCTIRSLSNLTEIHDQISGMARCPYSPQHNSTALLTASGELYAATAMDFPGRDPAIYRSLGTLPPLRTAQYNSKWLNEPNFVSSYDIGNFTYFFFRENAVEHDCGKTVFSRPARVCKNDIGGRFLLEDTWTTFMKARLNCSRPGEVPFYYNELQGTFFLPELDLIYGIFTTNVNSIASSAVCVFNLSAISQAFNGPFKYQENSRSAWLPYPNPNPNFQCGTMDQGLYVNLTERNLQDAQKFILMHEVVQPVTTVPSFMEDNSRFSHLAVDVVQGRETLVHIIYLGTDYGTIKKVRAPLSQSSGSCLLEEIELFPERRSEPIRSLQILHSQSVLFVGLQEHVAKIPLKRCHFHQTRSACIGAQDPYCGWDAVMKKCTSLEESLSMTQWDQSIPTCPTRNLTVDGSFGPWSPWTPCTHTDGTAVGSCLCRSRSCDRPAPQCGGWQCEGPRMEITNCSRNGGWTPWTSWSPCSTTCGIGFQVRQRSCSNPTPRHGGRVCVGQNREERYCNEHLLCPPHVFWTGWGPWERCTAQCGGGIQARRRTCENGPDCAGSNVEYHPCNTNACPELKKTTPWTPWTPVNISDNGGHYEQRFRYTCKARLPDPNLLEVGRQRIEMRYCSSDGTSGCSTDGLSGDFLRAGRYSAHTVNGAWSAWTSWSQCSRDCSRGIRNRKRVCNNPEPKFGGMPCLGPSLEFQECNILPCPVDGVWSCWSSWSKCSATCGGGHYMRTRSCSNPAPAYGGDICLGLHTEEALCNTQTCPESWSEWSDWSVCDASGTQVRARQCILLFPVGSQCSGNTTESRPCVFDSNFIPEVSVARSSSVEEKRCGEFNMFHMFHMMAVGLSSSILGCLLTLLVYTYCQRYQQQSHDATVIHPVSPAALNSSITNHINKLDKYDSVEAIKAFNKNNLILEERNKYFNPHLTGKTYSNAYFTDLNNYDEY.

A signal peptide spans 1-21; it reads MKGACILAWLFSSLGVWRLAR. Over 22-971 the chain is Extracellular; sequence PETQDPAKCQ…RCGEFNMFHM (950 aa). Residues 35 to 484 enclose the Sema domain; the sequence is HPVVSYKEIG…LQEHVAKIPL (450 aa). 2 cysteine pairs are disulfide-bonded: C104–C114 and C131–C140. N-linked (GlcNAc...) asparagine glycans are attached at residues N147, N168, N227, and N277. 2 cysteine pairs are disulfide-bonded: C254-C357 and C278-C320. N323 and N367 each carry an N-linked (GlcNAc...) asparagine glycan. Cystine bridges form between C487/C504 and C496/C513. N-linked (GlcNAc...) asparagine glycosylation is found at N536 and N591. TSP type-1 domains are found at residues 540-593, 595-651, 653-702, 707-765, 784-839, 841-896, and 897-944; these read DGSF…TNCS, NGGW…LLCP, HVFW…NACP, TTPW…GCST, NGAW…LPCP, DGVW…QTCP, and ESWS…VFDS. Intrachain disulfides connect C607/C644, C611/C650, C622/C634, C665/C696, C669/C701, and C680/C686. Residue N717 is glycosylated (N-linked (GlcNAc...) asparagine). 6 disulfides stabilise this stretch: C796-C833, C800-C838, C811-C823, C853-C890, C857-C895, and C868-C880. N933 carries N-linked (GlcNAc...) asparagine glycosylation. Residues 972-992 traverse the membrane as a helical segment; that stretch reads FHMMAVGLSSSILGCLLTLLV. The Cytoplasmic portion of the chain corresponds to 993 to 1077; the sequence is YTYCQRYQQQ…FTDLNNYDEY (85 aa).

Belongs to the semaphorin family. In terms of assembly, binds PLXNB3. In terms of tissue distribution, in adult, detected in liver, brain, kidney, heart, lung and spleen.

The protein resides in the membrane. Functionally, bifunctional axonal guidance cue regulated by sulfated proteoglycans; attractive effects result from interactions with heparan sulfate proteoglycans (HSPGs), while the inhibitory effects depend on interactions with chondroitin sulfate proteoglycans (CSPGs). Ligand for receptor PLXNB3. In glioma cells, SEMA5A stimulation of PLXNB3 results in the disassembly of F-actin stress fibers, disruption of focal adhesions and cellular collapse as well as inhibition of cell migration and invasion through ARHGDIA-mediated inactivation of RAC1. May promote angiogenesis by increasing endothelial cell proliferation and migration and inhibiting apoptosis. The sequence is that of Semaphorin-5A (Sema5a) from Mus musculus (Mouse).